The chain runs to 246 residues: Probable transcriptional regulatory protein YebC (246 aa).

A disordered region spans residues 1–20 (MAGHSKWANTRHRKAAQDAK).

The protein belongs to the TACO1 family.

It is found in the cytoplasm. In Salmonella typhimurium (strain LT2 / SGSC1412 / ATCC 700720), this protein is Probable transcriptional regulatory protein YebC.